The sequence spans 347 residues: Bombesin receptor-activated protein C6orf89 homolog (347 aa).

The Cytoplasmic portion of the chain corresponds to 1–58; that stretch reads MDLAANEISIYDKLSETVDLVRQTGHQCGMSEKAIEKFIRQLLEKNEPQRPPPQYPLL. Residues 59–79 traverse the membrane as a helical segment; that stretch reads IVVYKVLATLGLILLTAYFVI. Residues 80-347 lie on the Extracellular side of the membrane; it reads QPFSPLAPEP…ICDGTAFSEL (268 aa).

In terms of assembly, homodimer. Interacts with BRS3. Interacts (via N-terminus) with SIN3B. Post-translationally, glycosylated.

The protein resides in the golgi apparatus membrane. Its subcellular location is the cytoplasm. Its function is as follows. Exhibits histone deacetylase (HDAC) enhancer properties. May play a role in cell cycle progression and wound repair of bronchial epithelial cells. This is Bombesin receptor-activated protein C6orf89 homolog from Pongo abelii (Sumatran orangutan).